The primary structure comprises 543 residues: CTP synthase (543 aa).

The interval 1 to 265 is amidoligase domain; sequence MTRYIFVTGG…DDFVVERFGL (265 aa). CTP is bound at residue Ser-13. Ser-13 contacts UTP. ATP is bound by residues 14 to 19 and Asp-71; that span reads SLGKGI. Mg(2+) contacts are provided by Asp-71 and Glu-139. CTP is bound by residues 146–148, 186–191, and Lys-222; these read DIE and KTKPTQ. Residues 186–191 and Lys-222 contribute to the UTP site; that span reads KTKPTQ. A Glutamine amidotransferase type-1 domain is found at 290 to 541; it reads TIAMVGKYME…VKAALAQHQK (252 aa). Gly-351 is a binding site for L-glutamine. The Nucleophile; for glutamine hydrolysis role is filled by Cys-378. L-glutamine contacts are provided by residues 379-382, Glu-402, and Arg-469; that span reads LGMQ. Catalysis depends on residues His-514 and Glu-516.

This sequence belongs to the CTP synthase family. Homotetramer.

The catalysed reaction is UTP + L-glutamine + ATP + H2O = CTP + L-glutamate + ADP + phosphate + 2 H(+). It catalyses the reaction L-glutamine + H2O = L-glutamate + NH4(+). The enzyme catalyses UTP + NH4(+) + ATP = CTP + ADP + phosphate + 2 H(+). It participates in pyrimidine metabolism; CTP biosynthesis via de novo pathway; CTP from UDP: step 2/2. With respect to regulation, allosterically activated by GTP, when glutamine is the substrate; GTP has no effect on the reaction when ammonia is the substrate. The allosteric effector GTP functions by stabilizing the protein conformation that binds the tetrahedral intermediate(s) formed during glutamine hydrolysis. Inhibited by the product CTP, via allosteric rather than competitive inhibition. Catalyzes the ATP-dependent amination of UTP to CTP with either L-glutamine or ammonia as the source of nitrogen. Regulates intracellular CTP levels through interactions with the four ribonucleotide triphosphates. This chain is CTP synthase, found in Pseudomonas savastanoi pv. phaseolicola (strain 1448A / Race 6) (Pseudomonas syringae pv. phaseolicola (strain 1448A / Race 6)).